The primary structure comprises 185 residues: Large ribosomal subunit protein uL22 (185 aa).

This sequence belongs to the universal ribosomal protein uL22 family. As to quaternary structure, part of the 50S ribosomal subunit.

This protein binds specifically to 23S rRNA. It makes multiple contacts with different domains of the 23S rRNA in the assembled 50S subunit and ribosome. Functionally, the globular domain of the protein is located near the polypeptide exit tunnel on the outside of the subunit, while an extended beta-hairpin is found that lines the wall of the exit tunnel in the center of the 70S ribosome. This is Large ribosomal subunit protein uL22 from Caldivirga maquilingensis (strain ATCC 700844 / DSM 13496 / JCM 10307 / IC-167).